The sequence spans 224 residues: Processed variable antigen (224 aa).

Tandem repeats lie at residues 1-6, 7-12, 13-18, 19-24, 25-30, 31-36, 37-42, 43-48, 49-54, 55-60, 61-66, 67-72, 73-78, 79-84, 85-90, 91-96, and 97-102. The segment at 1-102 is 17 X 6 AA tandem repeats of E-T-G-E-S-K; that stretch reads ETGESKETGE…GESKETGESK (102 aa). Residues 1–137 show a composition bias toward basic and acidic residues; sequence ETGESKETGE…TEESKDREGN (137 aa). The interval 1-224 is disordered; sequence ETGESKETGE…KKADNKKKKK (224 aa). The span at 144–153 shows a compositional bias: low complexity; it reads ENSENSNVTS. 2 stretches are compositionally biased toward basic and acidic residues: residues 156-173 and 185-217; these read EETKKLAEKEENEGEKLG and EDPKKLTEQEENGTKESSEETKDDKPEENEKKA.

This is Processed variable antigen from Plasmodium falciparum.